The chain runs to 390 residues: NADH-quinone oxidoreductase subunit H (390 aa).

Helical transmembrane passes span Trp-4–Thr-24, Leu-78–Ile-98, Val-120–Ala-140, Met-157–Ser-177, Gly-191–Glu-211, Tyr-247–Arg-266, Ile-278–Ile-298, Phe-315–Phe-337, and Trp-341–Leu-360.

The protein belongs to the complex I subunit 1 family. In terms of assembly, NDH-1 is composed of 15 different subunits. Subunits NuoA, H, J, K, L, M, N constitute the membrane sector of the complex.

Its subcellular location is the cell membrane. It carries out the reaction a quinone + NADH + 5 H(+)(in) = a quinol + NAD(+) + 4 H(+)(out). In terms of biological role, NDH-1 shuttles electrons from NADH, via FMN and iron-sulfur (Fe-S) centers, to quinones in the respiratory chain. The immediate electron acceptor for the enzyme in this species is believed to be ubiquinone. Couples the redox reaction to proton translocation (for every two electrons transferred, four hydrogen ions are translocated across the cytoplasmic membrane), and thus conserves the redox energy in a proton gradient. This subunit may bind ubiquinone. The chain is NADH-quinone oxidoreductase subunit H from Deinococcus deserti (strain DSM 17065 / CIP 109153 / LMG 22923 / VCD115).